We begin with the raw amino-acid sequence, 55 residues long: uncharacterized protein (55 aa).

This is an uncharacterized protein from Dictyostelium discoideum (Social amoeba).